The chain runs to 396 residues: Phosphoglycerate kinase (396 aa).

Substrate contacts are provided by residues 21–23 (DIN), arginine 36, 59–62 (HFGR), arginine 114, and arginine 147. ATP contacts are provided by residues lysine 197, glutamate 319, and 349-352 (GGDT).

Belongs to the phosphoglycerate kinase family. As to quaternary structure, monomer.

It is found in the cytoplasm. It catalyses the reaction (2R)-3-phosphoglycerate + ATP = (2R)-3-phospho-glyceroyl phosphate + ADP. It functions in the pathway carbohydrate degradation; glycolysis; pyruvate from D-glyceraldehyde 3-phosphate: step 2/5. The polypeptide is Phosphoglycerate kinase (Jannaschia sp. (strain CCS1)).